The following is a 625-amino-acid chain: Isocitrate dehydrogenase kinase/phosphatase (625 aa).

ATP contacts are provided by residues Ala325–Met331 and Lys346. Residue Asp381 is part of the active site. The segment at Arg596–Pro625 is disordered.

It belongs to the AceK family.

Its subcellular location is the cytoplasm. The enzyme catalyses L-seryl-[isocitrate dehydrogenase] + ATP = O-phospho-L-seryl-[isocitrate dehydrogenase] + ADP + H(+). In terms of biological role, bifunctional enzyme which can phosphorylate or dephosphorylate isocitrate dehydrogenase (IDH) on a specific serine residue. This is a regulatory mechanism which enables bacteria to bypass the Krebs cycle via the glyoxylate shunt in response to the source of carbon. When bacteria are grown on glucose, IDH is fully active and unphosphorylated, but when grown on acetate or ethanol, the activity of IDH declines drastically concomitant with its phosphorylation. The sequence is that of Isocitrate dehydrogenase kinase/phosphatase from Polaromonas sp. (strain JS666 / ATCC BAA-500).